The chain runs to 225 residues: UPF0758 protein Mhun_2739 (225 aa).

The 124-residue stretch at 102-225 (RITEPDHILK…VTSLRSLGYL (124 aa)) folds into the MPN domain. The Zn(2+) site is built by histidine 174, histidine 176, and aspartate 187. Positions 174-187 (HNHPSGNPEPSSED) match the JAMM motif motif.

It belongs to the UPF0758 family.

The polypeptide is UPF0758 protein Mhun_2739 (Methanospirillum hungatei JF-1 (strain ATCC 27890 / DSM 864 / NBRC 100397 / JF-1)).